Consider the following 391-residue polypeptide: Ferrochelatase (391 aa).

Residues His196 and Glu281 each contribute to the Fe cation site.

The protein belongs to the ferrochelatase family.

The protein resides in the cytoplasm. It carries out the reaction heme b + 2 H(+) = protoporphyrin IX + Fe(2+). Its pathway is porphyrin-containing compound metabolism; protoheme biosynthesis; protoheme from protoporphyrin-IX: step 1/1. Catalyzes the ferrous insertion into protoporphyrin IX. This is Ferrochelatase from Prochlorococcus marinus subsp. pastoris (strain CCMP1986 / NIES-2087 / MED4).